A 1887-amino-acid polypeptide reads, in one-letter code: DNA-directed RNA polymerase II subunit RPB1 (1887 aa).

Zn(2+)-binding residues include cysteine 67, cysteine 70, cysteine 77, histidine 80, cysteine 107, cysteine 110, cysteine 150, and cysteine 176. The tract at residues 156–178 is disordered; the sequence is MDLTKENQQPDPNKKPGHGGCGH. The Mg(2+) site is built by aspartate 487, aspartate 489, and aspartate 491. A bridging helix region spans residues 825–837; that stretch reads PSEFYFHAMGGRE. Residue lysine 1260 forms a Glycyl lysine isopeptide (Lys-Gly) (interchain with G-Cter in ubiquitin) linkage. Disordered stretches follow at residues 1528–1565 and 1579–1887; these read TPGG…GPSM and YSPT…ESED. Low complexity-rich tracts occupy residues 1529 to 1565, 1579 to 1610, and 1626 to 1650; these read PGGP…GPSM, YSPT…PTSP, and PQST…PTVQ. Residues 1579 to 1585 form repeat 1; that stretch reads YSPTSPN. The tract at residues 1579–1881 is C-terminal domain (CTD); 32 X 7 AA approximate tandem repeats of Y-[ST]-P-[STNVAPGN]-[STGMA]-[PSTR]-[SNAGCQKTLRIMH]; that stretch reads YSPTSPNYTA…SPAYSPSSPT (303 aa). A 2; approximate repeat occupies 1586–1592; it reads YTASSPG. 4 tandem repeats follow at residues 1598-1604, 1605-1611, 1631-1637, and 1638-1644. A compositionally biased stretch (polar residues) spans 1651-1664; that stretch reads FQSSPSFAGSGSNI. Over residues 1665–1760 the composition is skewed to low complexity; the sequence is YSPGNAYSPS…GVKYSPTSPT (96 aa). Tandem repeats lie at residues 1671–1677, 1678–1684, 1685–1691, 1692–1698, 1699–1705, 1706–1712, 1713–1719, 1720–1726, 1727–1733, 1740–1746, 1754–1760, 1761–1767, 1777–1783, 1784–1790, 1791–1797, 1798–1804, and 1811–1817. Residues 1776–1786 are compositionally biased toward polar residues; it reads QYTPGSPQYSP. Low complexity predominate over residues 1788 to 1813; the sequence is SPKYSPTSPLYSPSSPQHSPSNQYSP. Residues 1814-1831 are compositionally biased toward polar residues; the sequence is TGSTYSATSPRYSPNMSI. One copy of the 24; approximate repeat lies at 1818 to 1824; it reads YSATSPR. Tandem repeats lie at residues 1825–1831, 1832–1838, 1839–1845, 1846–1852, 1853–1859, 1860–1866, 1868–1874, and 1875–1881. The span at 1832-1849 shows a compositional bias: low complexity; the sequence is YSPSSTKYSPTSPTYTPT. Residues 1850–1859 show a composition bias toward polar residues; it reads ARNYSPTSPM. Low complexity predominate over residues 1860–1881; it reads YSPTAPSHYSPTSPAYSPSSPT.

It belongs to the RNA polymerase beta' chain family. As to quaternary structure, component of the RNA polymerase II (Pol II) complex consisting of 12 subunits. Post-translationally, the tandem 7 residues repeats in the C-terminal domain (CTD) can be highly phosphorylated. The phosphorylation activates Pol II. Phosphorylation occurs mainly at residues 'Ser-2' and 'Ser-5' of the heptapeptide repeat. The phosphorylation state is believed to result from the balanced action of site-specific CTD kinases and phosphatase, and a 'CTD code' that specifies the position of Pol II within the transcription cycle has been proposed. In terms of processing, following transcription stress, the elongating form of RNA polymerase II (RNA pol IIo) is polyubiquitinated via 'Lys-63'-linkages on Lys-1260 at DNA damage sites without leading to degradation: ubiquitination promotes RNA pol IIo backtracking to allow access by the transcription-coupled nucleotide excision repair (TC-NER) machinery. Subsequent DEF1-dependent polyubiquitination by the elongin complex via 'Lys-48'-linkages may lead to proteasome-mediated degradation; presumably at stalled RNA pol II where TC-NER has failed, to halt global transcription and enable 'last resort' DNA repair pathways.

It localises to the nucleus. The catalysed reaction is RNA(n) + a ribonucleoside 5'-triphosphate = RNA(n+1) + diphosphate. DNA-dependent RNA polymerase catalyzes the transcription of DNA into RNA using the four ribonucleoside triphosphates as substrates. Largest and catalytic component of RNA polymerase II which synthesizes mRNA precursors and many functional non-coding RNAs. Forms the polymerase active center together with the second largest subunit. Pol II is the central component of the basal RNA polymerase II transcription machinery. It is composed of mobile elements that move relative to each other. RPB1 is part of the core element with the central large cleft, the clamp element that moves to open and close the cleft and the jaws that are thought to grab the incoming DNA template. At the start of transcription, a single-stranded DNA template strand of the promoter is positioned within the central active site cleft of Pol II. A bridging helix emanates from RPB1 and crosses the cleft near the catalytic site and is thought to promote translocation of Pol II by acting as a ratchet that moves the RNA-DNA hybrid through the active site by switching from straight to bent conformations at each step of nucleotide addition. During transcription elongation, Pol II moves on the template as the transcript elongates. Elongation is influenced by the phosphorylation status of the C-terminal domain (CTD) of Pol II largest subunit (RPB1), which serves as a platform for assembly of factors that regulate transcription initiation, elongation, termination and mRNA processing. The polypeptide is DNA-directed RNA polymerase II subunit RPB1 (Drosophila melanogaster (Fruit fly)).